The chain runs to 352 residues: Protein MGF 360-16R (352 aa).

Belongs to the asfivirus MGF 360 family.

Its function is as follows. Plays a role in virus cell tropism, and may be required for efficient virus replication in macrophages. This is Protein MGF 360-16R from African swine fever virus (isolate Warthog/Namibia/Wart80/1980) (ASFV).